The following is a 555-amino-acid chain: MKKKNTENVRIIALGGVGEIGKNLYVIEIDSDIFVVDAGLMHPENEMLGIDVVIPDISYLIERADRVKAIFLTHGHDENIGGVFYLLNKLSVPVYGTKLTLALLREKLKQYGHNRKTDLREIHSKSVITFESTKVSFFRTIHSIPDSVGVSFKTSLGSIVCTGDFKFDQTPALNQTCDIGEIAKIGNSGVLALLSDSANAERPGYTPSEAAVSGEISDALYNSQNRVIIAVFASNINRIQQVIHAAAQNGRKIAVAGKNLQSVLQLARKLGYIEADDELFISVQDVKKYPKREVAIITAGSQGEPLAALTRMANKAHKQLNIEEGDTVVIASTPIPGQELIYSKTVDLLARAGAQVIFAQKRVHVSGHGSQEELKLMINLLKPKYLIPVNGEYRMQKAHSKIAEETGMKRSDIFLIEKGDVVEFRGQNVKIGDKVPYGNILIDGLGVGDIGNIVLRDRRLLSQDGILIVVITLDKQKKHLVSGPEIITRGFVYVRESEGLIVQATELVRSIVTEATETSNVEWSTLKQAMRDALNQFLYEKTKRKPMIIPIIMEV.

The Zn(2+) site is built by H74, H76, H142, and D164. 364–368 provides a ligand contact to substrate; that stretch reads HVSGH.

This sequence belongs to the metallo-beta-lactamase superfamily. RNA-metabolizing metallo-beta-lactamase-like family. Bacterial RNase J subfamily. Unclear whether it forms homodimers or belongs to a larger complex. According to probably does not form homodimers, while shows homodimer formation. Both reports show RNase J1 and J2 interaction, probably as a heterotetramer shows it is a component of a possible RNA degradosome complex composed of rny, rnjA, rnjB, pnp, pfkA and eno, while finds no evidence of an RNA degradosome complex. It depends on Zn(2+) as a cofactor.

Its subcellular location is the cytoplasm. Functionally, endonucleolytically cleaves the 5'-leader sequence of certain mRNAs. Endonuclease digestion by the RNase J1/J2 complex occurs at a different site and in some cases more efficiently than J1 or J2 alone. The exonuclease activity of the J1/J2 complex is highly processive on substrates longer than 5 nucleotides, on shorter substrates is distributive. Plays a role in mRNA maturation and stability. Appears to have a limited effect on 16S rRNA maturation, despite its similarity to RNase J1. This subunit alone has very poor 5'-3' exonuclease activity. The polypeptide is Ribonuclease J2 (Bacillus subtilis (strain 168)).